The following is a 58-amino-acid chain: Cecropin-A (58 aa).

An N-terminal signal peptide occupies residues 1-23 (MNFSKIFIFVVLAVLLLCSQTEA). Leucine 57 is subject to Leucine amide.

This sequence belongs to the cecropin family. As to expression, relatively abundant in head, thorax and to a lesser extent in abdominal carcass and anterior midgut.

It is found in the secreted. In terms of biological role, antibacterial activity against several Gram-positive and Gram-negative bacteria. Antifungal activity against A.fumigatus, B.cinerea, F.culmorum, F.oxysporum, N.crassa, C.albicans, C.neoformans and S.cerevisiae. The chain is Cecropin-A (CecA) from Anopheles gambiae (African malaria mosquito).